A 282-amino-acid chain; its full sequence is NADPH-dependent 7-cyano-7-deazaguanine reductase (282 aa).

88–90 (IES) is a binding site for substrate. NADPH is bound at residue 90-91 (SK). Catalysis depends on cysteine 190, which acts as the Thioimide intermediate. The Proton donor role is filled by aspartate 197. 229 to 230 (HE) is a substrate binding site. 258-259 (RG) serves as a coordination point for NADPH.

This sequence belongs to the GTP cyclohydrolase I family. QueF type 2 subfamily. In terms of assembly, homodimer.

The protein localises to the cytoplasm. The catalysed reaction is 7-aminomethyl-7-carbaguanine + 2 NADP(+) = 7-cyano-7-deazaguanine + 2 NADPH + 3 H(+). It functions in the pathway tRNA modification; tRNA-queuosine biosynthesis. Its function is as follows. Catalyzes the NADPH-dependent reduction of 7-cyano-7-deazaguanine (preQ0) to 7-aminomethyl-7-deazaguanine (preQ1). In Escherichia coli O9:H4 (strain HS), this protein is NADPH-dependent 7-cyano-7-deazaguanine reductase.